The chain runs to 500 residues: Probable cytosol aminopeptidase (500 aa).

The Mn(2+) site is built by Lys265 and Asp270. Lys277 is an active-site residue. Positions 288, 347, and 349 each coordinate Mn(2+). The active site involves Arg351.

This sequence belongs to the peptidase M17 family. Requires Mn(2+) as cofactor.

The protein resides in the cytoplasm. It carries out the reaction Release of an N-terminal amino acid, Xaa-|-Yaa-, in which Xaa is preferably Leu, but may be other amino acids including Pro although not Arg or Lys, and Yaa may be Pro. Amino acid amides and methyl esters are also readily hydrolyzed, but rates on arylamides are exceedingly low.. It catalyses the reaction Release of an N-terminal amino acid, preferentially leucine, but not glutamic or aspartic acids.. Its function is as follows. Presumably involved in the processing and regular turnover of intracellular proteins. Catalyzes the removal of unsubstituted N-terminal amino acids from various peptides. This is Probable cytosol aminopeptidase from Bdellovibrio bacteriovorus (strain ATCC 15356 / DSM 50701 / NCIMB 9529 / HD100).